Consider the following 341-residue polypeptide: Ferrochelatase (341 aa).

Residues His-196 and Glu-277 each contribute to the Fe cation site.

It belongs to the ferrochelatase family.

It is found in the cytoplasm. The catalysed reaction is heme b + 2 H(+) = protoporphyrin IX + Fe(2+). Its pathway is porphyrin-containing compound metabolism; protoheme biosynthesis; protoheme from protoporphyrin-IX: step 1/1. In terms of biological role, catalyzes the ferrous insertion into protoporphyrin IX. This chain is Ferrochelatase, found in Synechococcus sp. (strain JA-3-3Ab) (Cyanobacteria bacterium Yellowstone A-Prime).